Reading from the N-terminus, the 434-residue chain is 3-phosphoshikimate 1-carboxyvinyltransferase (434 aa).

3-phosphoshikimate is bound by residues K22, S23, and R27. K22 lines the phosphoenolpyruvate pocket. G93 and R121 together coordinate phosphoenolpyruvate. The 3-phosphoshikimate site is built by S168, S169, Q170, S199, D320, and K347. Q170 is a binding site for phosphoenolpyruvate. D320 functions as the Proton acceptor in the catalytic mechanism. Phosphoenolpyruvate contacts are provided by R351, R394, and K419.

Belongs to the EPSP synthase family. In terms of assembly, monomer.

The protein localises to the cytoplasm. The catalysed reaction is 3-phosphoshikimate + phosphoenolpyruvate = 5-O-(1-carboxyvinyl)-3-phosphoshikimate + phosphate. It functions in the pathway metabolic intermediate biosynthesis; chorismate biosynthesis; chorismate from D-erythrose 4-phosphate and phosphoenolpyruvate: step 6/7. Functionally, catalyzes the transfer of the enolpyruvyl moiety of phosphoenolpyruvate (PEP) to the 5-hydroxyl of shikimate-3-phosphate (S3P) to produce enolpyruvyl shikimate-3-phosphate and inorganic phosphate. This chain is 3-phosphoshikimate 1-carboxyvinyltransferase, found in Burkholderia cenocepacia (strain ATCC BAA-245 / DSM 16553 / LMG 16656 / NCTC 13227 / J2315 / CF5610) (Burkholderia cepacia (strain J2315)).